A 364-amino-acid chain; its full sequence is MELEGRGAGGVAGGPAAGPGRSPGESALLDGWLQRGVGRGAGGGEAGACRPPVRQDPDSGPDYEALPAGATVTTHMVAGAVAGILEHCVMYPIDCVKTRMQSLQPDPAARYRNVLEALWRIIRTEGLWRPMRGLNVTATGAGPAHALYFACYEKLKKTLSDVIHPGGNSHIANGAAGCVATLLHDAAMNPAEVVKQRMQMYNSPYHRVTDCVRAVWQNEGAGAFYRSYTTQLTMNVPFQAIHFMTYEFLQEHFNPQRRYNPSSHVLSGACAGAVAAAATTPLDVCKTLLNTQESLALNSHITGHITGMASAFRTVYQVGGVTAYFRGVQARVIYQIPSTAIAWSVYEFFKYLITKRQEEWRAGK.

Gly residues predominate over residues 1 to 17 (MELEGRGAGGVAGGPAA). Disordered stretches follow at residues 1 to 28 (MELEGRGAGGVAGGPAAGPGRSPGESAL) and 40 to 60 (GAGGGEAGACRPPVRQDPDSG). The segment covering 18–27 (GPGRSPGESA) has biased composition (low complexity). Solcar repeat units lie at residues 70-158 (ATVT…LKKT), 168-252 (NSHI…LQEH), and 259-352 (YNPS…FKYL). The next 6 helical transmembrane spans lie at 72–91 (VTTHMVAGAVAGILEHCVMY), 133–152 (GLNVTATGAGPAHALYFACY), 170–189 (HIANGAAGCVATLLHDAAMN), 227–246 (SYTTQLTMNVPFQAIHFMTY), 261–280 (PSSHVLSGACAGAVAAAATT), and 327–346 (GVQARVIYQIPSTAIAWSVY).

It belongs to the mitochondrial carrier (TC 2.A.29) family. In terms of tissue distribution, ubiquitous. Expressed in placenta, lung, kidney, pancreas, liver, brain, skeletal muscle and heart.

The protein localises to the mitochondrion inner membrane. The enzyme catalyses Fe(2+)(in) = Fe(2+)(out). Its function is as follows. Mitochondrial iron transporter that mediates iron uptake. Probably required for heme synthesis of hemoproteins and Fe-S cluster assembly in non-erythroid cells. This is Mitoferrin-2 (SLC25A28) from Homo sapiens (Human).